The sequence spans 249 residues: Triosephosphate isomerase (249 aa).

A substrate-binding site is contributed by 9–11 (NWK). Catalysis depends on H91, which acts as the Electrophile. The Proton acceptor role is filled by E163. Substrate-binding positions include G169, S209, and 230-231 (GG).

Belongs to the triosephosphate isomerase family. In terms of assembly, homodimer.

Its subcellular location is the cytoplasm. It catalyses the reaction D-glyceraldehyde 3-phosphate = dihydroxyacetone phosphate. Its pathway is carbohydrate biosynthesis; gluconeogenesis. It participates in carbohydrate degradation; glycolysis; D-glyceraldehyde 3-phosphate from glycerone phosphate: step 1/1. Its function is as follows. Involved in the gluconeogenesis. Catalyzes stereospecifically the conversion of dihydroxyacetone phosphate (DHAP) to D-glyceraldehyde-3-phosphate (G3P). In Halorhodospira halophila (strain DSM 244 / SL1) (Ectothiorhodospira halophila (strain DSM 244 / SL1)), this protein is Triosephosphate isomerase.